Consider the following 285-residue polypeptide: MVAITAALVKELRERTAAGMMECKKALVEANGDIELAIDNMRKSGQAKAAKKAGRIAAEGIILAKVSADGKYGVILELNCETDFVAKDAGFKAFGEEVINAALAEKIADIDVLKAKFEEQRANLVAKIGENINIRRVAVLEGDILGTYLHGARIGVMVAATGADEELVKHIAMHIAASKPEYVKPDDVPAEVVAREHQIQLDIAIESGKPREIAEKMVEGRMRKFTGEVSLTGQNFVMDPSKTVGDLLKENNADVVNFIRFEVGEGIEKVETDFAAEVAAMSKQS.

Residues 82–85 (TDFV) form an involved in Mg(2+) ion dislocation from EF-Tu region.

This sequence belongs to the EF-Ts family.

The protein localises to the cytoplasm. Functionally, associates with the EF-Tu.GDP complex and induces the exchange of GDP to GTP. It remains bound to the aminoacyl-tRNA.EF-Tu.GTP complex up to the GTP hydrolysis stage on the ribosome. This is Elongation factor Ts from Yersinia pseudotuberculosis serotype O:1b (strain IP 31758).